The chain runs to 277 residues: 4-hydroxy-tetrahydrodipicolinate reductase (277 aa).

An NAD(+)-binding site is contributed by 9 to 14 (GATGRM). Lys-37 is an NADP(+) binding site. 75-77 (GTS) lines the NAD(+) pocket. The Proton donor/acceptor role is filled by His-132. The active-site Proton donor is Lys-136. 142-143 (GT) serves as a coordination point for (S)-2,3,4,5-tetrahydrodipicolinate. Disordered regions lie at residues 154-173 (ARGA…ARGQ) and 247-277 (ERAA…VTSA). A compositionally biased stretch (low complexity) spans 250-265 (AQAAAGDAPSGPVDDG).

This sequence belongs to the DapB family.

It is found in the cytoplasm. The catalysed reaction is (S)-2,3,4,5-tetrahydrodipicolinate + NAD(+) + H2O = (2S,4S)-4-hydroxy-2,3,4,5-tetrahydrodipicolinate + NADH + H(+). It carries out the reaction (S)-2,3,4,5-tetrahydrodipicolinate + NADP(+) + H2O = (2S,4S)-4-hydroxy-2,3,4,5-tetrahydrodipicolinate + NADPH + H(+). Its pathway is amino-acid biosynthesis; L-lysine biosynthesis via DAP pathway; (S)-tetrahydrodipicolinate from L-aspartate: step 4/4. Its function is as follows. Catalyzes the conversion of 4-hydroxy-tetrahydrodipicolinate (HTPA) to tetrahydrodipicolinate. The polypeptide is 4-hydroxy-tetrahydrodipicolinate reductase (Clavibacter michiganensis subsp. michiganensis (strain NCPPB 382)).